The primary structure comprises 293 residues: 4-diphosphocytidyl-2-C-methyl-D-erythritol kinase (293 aa).

Lys16 is a catalytic residue. ATP is bound at residue 99-109 (PMGAGLGGGSS). Asp141 is an active-site residue.

The protein belongs to the GHMP kinase family. IspE subfamily.

It carries out the reaction 4-CDP-2-C-methyl-D-erythritol + ATP = 4-CDP-2-C-methyl-D-erythritol 2-phosphate + ADP + H(+). Its pathway is isoprenoid biosynthesis; isopentenyl diphosphate biosynthesis via DXP pathway; isopentenyl diphosphate from 1-deoxy-D-xylulose 5-phosphate: step 3/6. Its function is as follows. Catalyzes the phosphorylation of the position 2 hydroxy group of 4-diphosphocytidyl-2C-methyl-D-erythritol. This Burkholderia multivorans (strain ATCC 17616 / 249) protein is 4-diphosphocytidyl-2-C-methyl-D-erythritol kinase.